A 115-amino-acid polypeptide reads, in one-letter code: SPbeta prophage-derived uncharacterized membrane protein YosE (115 aa).

3 consecutive transmembrane segments (helical) span residues 20–42, 58–78, and 95–115; these read IVVG…YGLN, VHVT…FVKG, and GKSL…TLFI.

Its subcellular location is the cell membrane. The chain is SPbeta prophage-derived uncharacterized membrane protein YosE (yosE) from Bacillus subtilis (strain 168).